The sequence spans 482 residues: tRNA sulfurtransferase (482 aa).

Positions 61-165 (LAIRDALTRI…DDRLLLIKGR (105 aa)) constitute a THUMP domain. Residues 183-184 (LI), Lys265, Gly287, and Gln296 contribute to the ATP site. A disulfide bridge links Cys344 with Cys456. Positions 404–482 (FGPNDVILDI…GFQNVKVYRP (79 aa)) constitute a Rhodanese domain. Catalysis depends on Cys456, which acts as the Cysteine persulfide intermediate.

The protein belongs to the ThiI family.

The protein localises to the cytoplasm. The catalysed reaction is [ThiI sulfur-carrier protein]-S-sulfanyl-L-cysteine + a uridine in tRNA + 2 reduced [2Fe-2S]-[ferredoxin] + ATP + H(+) = [ThiI sulfur-carrier protein]-L-cysteine + a 4-thiouridine in tRNA + 2 oxidized [2Fe-2S]-[ferredoxin] + AMP + diphosphate. The enzyme catalyses [ThiS sulfur-carrier protein]-C-terminal Gly-Gly-AMP + S-sulfanyl-L-cysteinyl-[cysteine desulfurase] + AH2 = [ThiS sulfur-carrier protein]-C-terminal-Gly-aminoethanethioate + L-cysteinyl-[cysteine desulfurase] + A + AMP + 2 H(+). The protein operates within cofactor biosynthesis; thiamine diphosphate biosynthesis. In terms of biological role, catalyzes the ATP-dependent transfer of a sulfur to tRNA to produce 4-thiouridine in position 8 of tRNAs, which functions as a near-UV photosensor. Also catalyzes the transfer of sulfur to the sulfur carrier protein ThiS, forming ThiS-thiocarboxylate. This is a step in the synthesis of thiazole, in the thiamine biosynthesis pathway. The sulfur is donated as persulfide by IscS. The protein is tRNA sulfurtransferase of Citrobacter koseri (strain ATCC BAA-895 / CDC 4225-83 / SGSC4696).